The primary structure comprises 926 residues: Alanine--tRNA ligase (926 aa).

Zn(2+) is bound by residues His611, His615, Cys714, and His718.

This sequence belongs to the class-II aminoacyl-tRNA synthetase family. The cofactor is Zn(2+).

It is found in the cytoplasm. It carries out the reaction tRNA(Ala) + L-alanine + ATP = L-alanyl-tRNA(Ala) + AMP + diphosphate. Its function is as follows. Catalyzes the attachment of alanine to tRNA(Ala) in a two-step reaction: alanine is first activated by ATP to form Ala-AMP and then transferred to the acceptor end of tRNA(Ala). Also edits incorrectly charged Ser-tRNA(Ala) and Gly-tRNA(Ala) via its editing domain. This is Alanine--tRNA ligase from Methanosarcina mazei (strain ATCC BAA-159 / DSM 3647 / Goe1 / Go1 / JCM 11833 / OCM 88) (Methanosarcina frisia).